Consider the following 373-residue polypeptide: MKIISEGETKLMVPEESTLSKKDTVFYNPVMETNRDISVSVVQSFLDNFKRDEFLMCDPLGGSGARGIRYANELKFNGELKVSIGDINPSAVKMIKENLKLNELENVEVFHEDANVLLSKNFKIFNVVDLDPFGSPVPYLDSGIRASLTKGGLLCMTATDTAVLCGAYRKTCIRKYNAIPLKGDKELAVRLMIGYAVKMASKYDIGLKPIFSHVTDHYARTFMVTERGAGKADSAIENLGYIRQDSEQKSFKTFEEGYEKGYAGPFYLGEISDKNIVQNSLETAKNRNYSKRAIDILELISKESKIEQVGCFDIHELCSFIKKLVPPVNDIMENLKENGFKVSRVHYNPYGLKTDAELSDLVVLISEYHSKKY.

The 364-residue stretch at 2-365 (KIISEGETKL…AELSDLVVLI (364 aa)) folds into the Trm1 methyltransferase domain. R35, R66, D86, D113, and A114 together coordinate S-adenosyl-L-methionine.

Belongs to the class I-like SAM-binding methyltransferase superfamily. Trm1 family.

The enzyme catalyses guanosine(26) in tRNA + 2 S-adenosyl-L-methionine = N(2)-dimethylguanosine(26) in tRNA + 2 S-adenosyl-L-homocysteine + 2 H(+). Its function is as follows. Dimethylates a single guanine residue at position 26 of a number of tRNAs using S-adenosyl-L-methionine as donor of the methyl groups. The polypeptide is tRNA (guanine(26)-N(2))-dimethyltransferase (Methanococcus maripaludis (strain C7 / ATCC BAA-1331)).